The chain runs to 137 residues: 1,4-dihydroxy-2-naphthoyl-CoA hydrolase (137 aa).

D13 is an active-site residue.

The protein belongs to the 4-hydroxybenzoyl-CoA thioesterase family. DHNA-CoA hydrolase subfamily.

The catalysed reaction is 1,4-dihydroxy-2-naphthoyl-CoA + H2O = 1,4-dihydroxy-2-naphthoate + CoA + H(+). It participates in cofactor biosynthesis; phylloquinone biosynthesis. Its pathway is quinol/quinone metabolism; 1,4-dihydroxy-2-naphthoate biosynthesis; 1,4-dihydroxy-2-naphthoate from chorismate: step 7/7. Its function is as follows. Catalyzes the hydrolysis of 1,4-dihydroxy-2-naphthoyl-CoA (DHNA-CoA) to 1,4-dihydroxy-2-naphthoate (DHNA), a reaction involved in phylloquinone (vitamin K1) biosynthesis. The polypeptide is 1,4-dihydroxy-2-naphthoyl-CoA hydrolase (Crocosphaera subtropica (strain ATCC 51142 / BH68) (Cyanothece sp. (strain ATCC 51142))).